The chain runs to 200 residues: NADH-quinone oxidoreductase chain 10 (200 aa).

5 helical membrane-spanning segments follow: residues Met2–Ile22, Pro26–Leu46, Phe51–Val71, Leu90–Gly110, and Val144–Leu164.

It belongs to the complex I subunit 6 family. In terms of assembly, NDH-1 is composed of at least 14 different subunits, Nqo1 to Nqo14. The complex has a L-shaped structure, with the hydrophobic arm (subunits Nqo7, Nqo8, Nqo10 to Nqo14) embedded in the inner membrane and the hydrophilic peripheral arm (subunits Nqo1 to Nqo6, Nqo9) protruding into the bacterial cytoplasm. The hydrophilic domain contains all the redox centers.

It localises to the cell inner membrane. It catalyses the reaction a quinone + NADH + 5 H(+)(in) = a quinol + NAD(+) + 4 H(+)(out). In terms of biological role, NDH-1 shuttles electrons from NADH, via FMN and iron-sulfur (Fe-S) centers, to quinones in the respiratory chain. The immediate electron acceptor for the enzyme in this species is believed to be ubiquinone. Couples the redox reaction to proton translocation (for every two electrons transferred, four hydrogen ions are translocated across the cytoplasmic membrane), and thus conserves the redox energy in a proton gradient. The protein is NADH-quinone oxidoreductase chain 10 of Paracoccus denitrificans.